The following is a 300-amino-acid chain: uncharacterized protein (300 aa).

This is an uncharacterized protein from Ictalurid herpesvirus 1 (strain Auburn) (IcHV-1).